A 376-amino-acid chain; its full sequence is Ribosomal RNA large subunit methyltransferase G (376 aa).

The protein belongs to the methyltransferase superfamily. RlmG family.

Its subcellular location is the cytoplasm. The catalysed reaction is guanosine(1835) in 23S rRNA + S-adenosyl-L-methionine = N(2)-methylguanosine(1835) in 23S rRNA + S-adenosyl-L-homocysteine + H(+). Specifically methylates the guanine in position 1835 (m2G1835) of 23S rRNA. The protein is Ribosomal RNA large subunit methyltransferase G of Vibrio vulnificus (strain CMCP6).